We begin with the raw amino-acid sequence, 216 residues long: Vesicle-associated membrane protein 7A (216 aa).

The Cytoplasmic portion of the chain corresponds to 1 to 189 (MSQTDILYAC…KRKLWWQNKK (189 aa)). The region spanning 6-112 (ILYACVSYKG…ATYDPFIRVL (107 aa)) is the Longin domain. The v-SNARE coiled-coil homology domain maps to 126–186 (KMNLVMDQVS…VALKRKLWWQ (61 aa)). Residues 190–210 (LAIAIGLVVCILIAVITLALL) traverse the membrane as a helical; Anchor for type IV membrane protein segment. The Vesicular portion of the chain corresponds to 211-216 (KYFKVI).

The protein belongs to the synaptobrevin family. In terms of assembly, component of the SNARE complex composed of syn7A, syn8A, vamp7A and vti1A.

The protein localises to the cytoplasmic vesicle. It localises to the secretory vesicle membrane. The protein resides in the golgi apparatus. Its subcellular location is the trans-Golgi network membrane. It is found in the late endosome membrane. The protein localises to the lysosome membrane. It localises to the endoplasmic reticulum membrane. The protein resides in the phagosome membrane. In terms of biological role, involved in the targeting and/or fusion of transport vesicles to their target membrane during transport of proteins from the early endosome to the lysosome. Required for heterotypic fusion of late endosomes with lysosomes and homotypic lysosomal fusion. Required for calcium regulated lysosomal exocytosis. The sequence is that of Vesicle-associated membrane protein 7A from Dictyostelium discoideum (Social amoeba).